A 95-amino-acid polypeptide reads, in one-letter code: Aspartyl/glutamyl-tRNA(Asn/Gln) amidotransferase subunit C (95 aa).

Belongs to the GatC family. In terms of assembly, heterotrimer of A, B and C subunits.

The catalysed reaction is L-glutamyl-tRNA(Gln) + L-glutamine + ATP + H2O = L-glutaminyl-tRNA(Gln) + L-glutamate + ADP + phosphate + H(+). The enzyme catalyses L-aspartyl-tRNA(Asn) + L-glutamine + ATP + H2O = L-asparaginyl-tRNA(Asn) + L-glutamate + ADP + phosphate + 2 H(+). Allows the formation of correctly charged Asn-tRNA(Asn) or Gln-tRNA(Gln) through the transamidation of misacylated Asp-tRNA(Asn) or Glu-tRNA(Gln) in organisms which lack either or both of asparaginyl-tRNA or glutaminyl-tRNA synthetases. The reaction takes place in the presence of glutamine and ATP through an activated phospho-Asp-tRNA(Asn) or phospho-Glu-tRNA(Gln). The chain is Aspartyl/glutamyl-tRNA(Asn/Gln) amidotransferase subunit C from Caldanaerobacter subterraneus subsp. tengcongensis (strain DSM 15242 / JCM 11007 / NBRC 100824 / MB4) (Thermoanaerobacter tengcongensis).